The following is a 991-amino-acid chain: MSGLYRILVQLEQSPYVKTVPLNMRRDFFFLVVTWMPKTVKMNGSSFVPSLQLLLMLVGFSLPPVAETYGFNKCTQYEFDIHHVLCIRKKITNLTEAISDIPRYTTHLNLTHNEIQVLPPWSFTNLSALVDLRLEWNSIWKIDEGAFRGLENLTLLNLVENKIQSVNNSFEGLSSLKTLLLSHNQITHIHKDAFTPLIKLKYLSLSRNNISDFSGILEAVQHLPCLERLDLTNNSIMYLDHSPRSLVSLTHLSFEGNKLRELNFSALSLPNLTNLSASRNGNKVIQNVYLKTLPQLKSLNLSGTVIKLENLSAKHLQNLRAMDLSNWELRHGHLDMKTVCHLLGNLPKLETLVFQKNVTNAEGIKQLAKCTRLLFLDLGQNSDLIYLNDSEFNALPSLQKLNLNKCQLSFINNRTWSSLQNLTSLDLSHNKFKSFPDFAFSPLKHLEFLSLSRNPITELNNLAFSGLFALKELNLAACWIVTIDRYSFTQFPNLEVLDLGDNNIRTLNHGTFRPLKKLQSLILSHNCLKILEPNSFSGLTNLRSLDLMYNSLSYFHEHLFSGLEKLLILKLGFNKITYETTRTLQYPPFIKLKSLKQLNLEGQRHGIQVVPSNFFQGLGSLQELLLGKNPSVFLDHHQFDPLINLTKLDISGTKDGDRSLYLNASLFQNLKRLKILRLENNNLESLVPDMFSSLQSLQVFSLRFNNLKVINQSHLKNLKSLMFFDVYGNKLQCTCDNLWFKNWSMNTEEVHIPFLRSYPCQQPGSQSLLIDFDDAMCNFDLGKVYFLCSFSMVLSTMVFSWFSTKMIASLWYGLYICRAWYLTKWHKTEKKFLYDAFVSFSATDEAWVYKELVPALEQGSQTTFKLCLHQRDFEPGIDIFENIQNAINTSRKTLCVVSNHYLHSEWCRLEVQLASMKMFYEHKDVIILIFLEEIPNYKLSSYHRLRKLINKQTFITWPDSVHQQPLFWARIRNALGKETVEKENTHLIVVE.

The signal sequence occupies residues 1–68; the sequence is MSGLYRILVQ…GFSLPPVAET (68 aa). Residues 69–783 are Extracellular-facing; it reads YGFNKCTQYE…DAMCNFDLGK (715 aa). 3 N-linked (GlcNAc...) asparagine glycosylation sites follow: asparagine 93, asparagine 109, and asparagine 125. LRR repeat units follow at residues 104–125, 128–149, 152–174, 175–196, 199–220, 225–246, 248–268, 271–292, 295–315, 318–338, 348–368, 372–394, 397–418, 421–442, 445–466, 469–490, 493–514, 517–538, 541–562, 565–585, 594–617, 620–641, 644–665, 672–693, and 696–716; these read YTTH…SFTN, ALVD…AFRG, NLTL…EGLS, SLKT…AFTP, KLKY…LEAV, CLER…PRSL, SLTH…SALS, NLTN…YLKT, QLKS…SAKH, NLRA…DMKT, KLET…KQLA, RLLF…EFNA, SLQK…TWSS, NLTS…AFSP, HLEF…AFSG, ALKE…SFTQ, NLEV…TFRP, KLQS…SFSG, NLRS…LFSG, KLLI…RTLQ, SLKQ…FFQG, SLQE…QFDP, NLTK…LNAS, RLKI…MFSS, and SLQV…SHLK. Asparagine 152 and asparagine 167 each carry an N-linked (GlcNAc...) asparagine glycan. 7 N-linked (GlcNAc...) asparagine glycosylation sites follow: asparagine 209, asparagine 233, asparagine 263, asparagine 271, asparagine 274, asparagine 300, and asparagine 310. N-linked (GlcNAc...) asparagine glycans are attached at residues asparagine 357, asparagine 388, asparagine 413, and asparagine 421. 2 N-linked (GlcNAc...) asparagine glycosylation sites follow: asparagine 644 and asparagine 663. Residues asparagine 711 and asparagine 742 are each glycosylated (N-linked (GlcNAc...) asparagine). An LRRCT domain is found at 729 to 779; that stretch reads NKLQCTCDNLWFKNWSMNTEEVHIPFLRSYPCQQPGSQSLLIDFDDAMCNF. Residues 784–804 traverse the membrane as a helical segment; sequence VYFLCSFSMVLSTMVFSWFST. Residues 805–991 lie on the Cytoplasmic side of the membrane; it reads KMIASLWYGL…KENTHLIVVE (187 aa). One can recognise a TIR domain in the interval 832–975; it reads FLYDAFVSFS…LFWARIRNAL (144 aa).

Belongs to the Toll-like receptor family. Binds MYD88 via their respective TIR domains. Interacts with UNC93B1.

The protein localises to the endosome membrane. Component of innate and adaptive immunity that recognizes and binds 23S rRNA from bacteria. TLRs (Toll-like receptors) control host immune response against pathogens through recognition of molecular patterns specific to microorganisms. Acts via MYD88 and TRAF6, leading to NF-kappa-B activation, cytokine secretion and the inflammatory response. Specifically binds the 5'-CGGAAAGACC-3' sequence on bacterial 23S rRNA, a sequence also bound by MLS group antibiotics (including erythromycin). May also recognize vesicular stomatitis virus; however, these data require additional evidences. The polypeptide is Toll-like receptor 13 (Tlr13) (Mus musculus (Mouse)).